A 389-amino-acid chain; its full sequence is Succinate--CoA ligase [ADP-forming] subunit beta (389 aa).

The region spanning 9–236 is the ATP-grasp domain; that stretch reads KELFASHGVP…KDAEDPLEAK (228 aa). ATP is bound by residues Lys-45, 52–54, Ser-94, and Glu-99; that span reads GRG. The Mg(2+) site is built by Asn-191 and Asp-205. Residues Asn-256 and 318-320 contribute to the substrate site; that span reads GIT.

It belongs to the succinate/malate CoA ligase beta subunit family. In terms of assembly, heterotetramer of two alpha and two beta subunits. The cofactor is Mg(2+).

The enzyme catalyses succinate + ATP + CoA = succinyl-CoA + ADP + phosphate. It carries out the reaction GTP + succinate + CoA = succinyl-CoA + GDP + phosphate. The protein operates within carbohydrate metabolism; tricarboxylic acid cycle; succinate from succinyl-CoA (ligase route): step 1/1. Its function is as follows. Succinyl-CoA synthetase functions in the citric acid cycle (TCA), coupling the hydrolysis of succinyl-CoA to the synthesis of either ATP or GTP and thus represents the only step of substrate-level phosphorylation in the TCA. The beta subunit provides nucleotide specificity of the enzyme and binds the substrate succinate, while the binding sites for coenzyme A and phosphate are found in the alpha subunit. This is Succinate--CoA ligase [ADP-forming] subunit beta from Saccharopolyspora erythraea (strain ATCC 11635 / DSM 40517 / JCM 4748 / NBRC 13426 / NCIMB 8594 / NRRL 2338).